We begin with the raw amino-acid sequence, 249 residues long: Ubiquinone biosynthesis O-methyltransferase (249 aa).

Arginine 41, glycine 72, aspartate 93, and methionine 136 together coordinate S-adenosyl-L-methionine.

It belongs to the methyltransferase superfamily. UbiG/COQ3 family.

The enzyme catalyses a 3-demethylubiquinol + S-adenosyl-L-methionine = a ubiquinol + S-adenosyl-L-homocysteine + H(+). It carries out the reaction a 3-(all-trans-polyprenyl)benzene-1,2-diol + S-adenosyl-L-methionine = a 2-methoxy-6-(all-trans-polyprenyl)phenol + S-adenosyl-L-homocysteine + H(+). It functions in the pathway cofactor biosynthesis; ubiquinone biosynthesis. O-methyltransferase that catalyzes the 2 O-methylation steps in the ubiquinone biosynthetic pathway. This Methylobacterium sp. (strain 4-46) protein is Ubiquinone biosynthesis O-methyltransferase.